Here is a 436-residue protein sequence, read N- to C-terminus: MNNIRTIKGGVNLKGKIKVPGDKSISHRALIIGSIAEGETTIEGFLYSEDPLSTADCLRKLGVNIPEIKKDKPFTISGLGINGLKEPKEILNCGNSGTTMRLLMGLLAGQEGKNFILTGDISLNERPMGRVGKPLSLMGGKIFGREKGNKAPISINGNKLKGCVMGTPVASAQVKSAILLAGLKASGTTSVIEPASSRDHTERMLKAFGADITIRGEFGRNVVIKSGGSLIGQKILIPGDISSASFWMIAASIVPNSEVLIQNVGLNPTRTGILNIMNSMGCNYEILDKSTIAGEPIGSIKVKTSNNLKSFIIEGDILPKLIDEIPILTVAACFCNGVSEIKDAQELRVKETDRLKVMARQLQKFGAEITEKEDGLIINGQSKFHSAEVDSETDHRVAMSLAIASLLAKGTSKIMRADAASVSYPTFWEELAKLTN.

Lys-23, Ser-24, and Arg-28 together coordinate 3-phosphoshikimate. Lys-23 is a binding site for phosphoenolpyruvate. Gly-97 and Arg-126 together coordinate phosphoenolpyruvate. 3-phosphoshikimate contacts are provided by Ser-171, Gln-173, Asp-323, and Lys-350. Gln-173 provides a ligand contact to phosphoenolpyruvate. Asp-323 (proton acceptor) is an active-site residue. Residues Arg-354 and Arg-396 each contribute to the phosphoenolpyruvate site.

The protein belongs to the EPSP synthase family. Monomer.

It localises to the cytoplasm. The enzyme catalyses 3-phosphoshikimate + phosphoenolpyruvate = 5-O-(1-carboxyvinyl)-3-phosphoshikimate + phosphate. It functions in the pathway metabolic intermediate biosynthesis; chorismate biosynthesis; chorismate from D-erythrose 4-phosphate and phosphoenolpyruvate: step 6/7. In terms of biological role, catalyzes the transfer of the enolpyruvyl moiety of phosphoenolpyruvate (PEP) to the 5-hydroxyl of shikimate-3-phosphate (S3P) to produce enolpyruvyl shikimate-3-phosphate and inorganic phosphate. This Prochlorococcus marinus (strain MIT 9301) protein is 3-phosphoshikimate 1-carboxyvinyltransferase.